The chain runs to 58 residues: Large ribosomal subunit protein bL32 (58 aa).

Residues 1-19 are compositionally biased toward basic residues; that stretch reads MAVPKRKTSKSNTKMRRAA. Positions 1–22 are disordered; that stretch reads MAVPKRKTSKSNTKMRRAANSK.

This sequence belongs to the bacterial ribosomal protein bL32 family.

The chain is Large ribosomal subunit protein bL32 from Clostridioides difficile (strain 630) (Peptoclostridium difficile).